Here is a 136-residue protein sequence, read N- to C-terminus: Monothiol glutaredoxin-S3 (136 aa).

Residues Glu18–Trp135 form the Glutaredoxin domain. A [2Fe-2S] cluster-binding site is contributed by Cys38. The Responsive for interaction with TGA factors signature appears at Ala133–Leu136.

It belongs to the glutaredoxin family. CC-type subfamily.

Its subcellular location is the cytoplasm. The protein localises to the nucleus. Its function is as follows. May only reduce GSH-thiol disulfides, but not protein disulfides. The polypeptide is Monothiol glutaredoxin-S3 (GRXS3) (Oryza sativa subsp. japonica (Rice)).